Reading from the N-terminus, the 686-residue chain is U3 small nucleolar RNA-associated protein 4 homolog (686 aa).

WD repeat units lie at residues 14–53 (YVPS…FQEK), 57–96 (GHES…IKYT), 99–138 (AFGG…IQFA), 143–181 (RQKS…IIRK), 193–231 (KSRC…LVKS), 234–273 (VANA…SNSS), 285–322 (HHTH…EVKN), 324–359 (DAAL…ELWR), 435–474 (SFLR…FKHL), 482–521 (GTVE…LHCT), and 524–563 (AYNF…YTEW). Lys-321 participates in a covalent cross-link: Glycyl lysine isopeptide (Lys-Gly) (interchain with G-Cter in SUMO2).

Interacts with HIVEP1 Interacts with NOL11. Part of the small subunit (SSU) processome, composed of more than 70 proteins and the RNA chaperone small nucleolar RNA (snoRNA) U3. May be a component of the proposed t-UTP subcomplex of the ribosomal small subunit (SSU) processome containing at least UTP4, WDR43, HEATR1, UTP15, WDR75. Post-translationally, may be phosphorylated during mitosis; may control the association of this protein with WRD43 and UTP15. As to expression, expressed in liver.

The protein localises to the nucleus. It localises to the nucleolus. The protein resides in the chromosome. Ribosome biogenesis factor. Involved in nucleolar processing of pre-18S ribosomal RNA. Part of the small subunit (SSU) processome, first precursor of the small eukaryotic ribosomal subunit. During the assembly of the SSU processome in the nucleolus, many ribosome biogenesis factors, an RNA chaperone and ribosomal proteins associate with the nascent pre-rRNA and work in concert to generate RNA folding, modifications, rearrangements and cleavage as well as targeted d Involved in SSU pre-rRNA processing at sites A', A0, 1 and 2b. Required for optimal pre-ribosomal RNA transcription by RNA polymerase. May be a transcriptional regulator. This is U3 small nucleolar RNA-associated protein 4 homolog (Utp4) from Mus musculus (Mouse).